An 881-amino-acid polypeptide reads, in one-letter code: Valine--tRNA ligase (881 aa).

The short motif at 48–58 (PNITGKLHLGH) is the 'HIGH' region element. The 'KMSKS' region motif lies at 527–531 (KMSKS). Lys530 is an ATP binding site. Coiled-coil stretches lie at residues 721–747 (KNETSENAMNQIIEAIKSIRNVRAEMN) and 811–881 (LLDL…AALK).

This sequence belongs to the class-I aminoacyl-tRNA synthetase family. ValS type 1 subfamily. As to quaternary structure, monomer.

It localises to the cytoplasm. It carries out the reaction tRNA(Val) + L-valine + ATP = L-valyl-tRNA(Val) + AMP + diphosphate. Its function is as follows. Catalyzes the attachment of valine to tRNA(Val). As ValRS can inadvertently accommodate and process structurally similar amino acids such as threonine, to avoid such errors, it has a 'posttransfer' editing activity that hydrolyzes mischarged Thr-tRNA(Val) in a tRNA-dependent manner. The chain is Valine--tRNA ligase from Clostridium acetobutylicum (strain ATCC 824 / DSM 792 / JCM 1419 / IAM 19013 / LMG 5710 / NBRC 13948 / NRRL B-527 / VKM B-1787 / 2291 / W).